The chain runs to 430 residues: Adenylosuccinate synthetase (430 aa).

GTP contacts are provided by residues 13–19 and 41–43; these read GDEGKGK and GHT. The active-site Proton acceptor is the Asp14. Mg(2+) is bound by residues Asp14 and Gly41. IMP-binding positions include 14-17, 39-42, Thr130, Arg144, Gln225, Thr240, and Arg304; these read DEGK and NAGH. His42 functions as the Proton donor in the catalytic mechanism. Substrate is bound at residue 300–306; sequence STTGRAR. GTP is bound by residues Arg306, 332–334, and 414–416; these read KLD and STG.

It belongs to the adenylosuccinate synthetase family. Homodimer. The cofactor is Mg(2+).

It is found in the cytoplasm. The catalysed reaction is IMP + L-aspartate + GTP = N(6)-(1,2-dicarboxyethyl)-AMP + GDP + phosphate + 2 H(+). It participates in purine metabolism; AMP biosynthesis via de novo pathway; AMP from IMP: step 1/2. Plays an important role in the de novo pathway of purine nucleotide biosynthesis. Catalyzes the first committed step in the biosynthesis of AMP from IMP. The protein is Adenylosuccinate synthetase of Pseudomonas putida (strain ATCC 700007 / DSM 6899 / JCM 31910 / BCRC 17059 / LMG 24140 / F1).